We begin with the raw amino-acid sequence, 212 residues long: Large ribosomal subunit protein uL4 (212 aa).

Residues 43 to 52 (NNRQGTASTK) are compositionally biased toward polar residues. The disordered stretch occupies residues 43-77 (NNRQGTASTKTRSEVRGGGRKPWRQKGTGRARAGS). A compositionally biased stretch (basic residues) spans 60-71 (GGRKPWRQKGTG).

The protein belongs to the universal ribosomal protein uL4 family. In terms of assembly, part of the 50S ribosomal subunit.

Its function is as follows. One of the primary rRNA binding proteins, this protein initially binds near the 5'-end of the 23S rRNA. It is important during the early stages of 50S assembly. It makes multiple contacts with different domains of the 23S rRNA in the assembled 50S subunit and ribosome. In terms of biological role, forms part of the polypeptide exit tunnel. The chain is Large ribosomal subunit protein uL4 from Trichodesmium erythraeum (strain IMS101).